The following is a 240-amino-acid chain: 1-(5-phosphoribosyl)-5-[(5-phosphoribosylamino)methylideneamino] imidazole-4-carboxamide isomerase (240 aa).

Catalysis depends on D8, which acts as the Proton acceptor. D129 acts as the Proton donor in catalysis.

The protein belongs to the HisA/HisF family.

It localises to the cytoplasm. The catalysed reaction is 1-(5-phospho-beta-D-ribosyl)-5-[(5-phospho-beta-D-ribosylamino)methylideneamino]imidazole-4-carboxamide = 5-[(5-phospho-1-deoxy-D-ribulos-1-ylimino)methylamino]-1-(5-phospho-beta-D-ribosyl)imidazole-4-carboxamide. It functions in the pathway amino-acid biosynthesis; L-histidine biosynthesis; L-histidine from 5-phospho-alpha-D-ribose 1-diphosphate: step 4/9. This chain is 1-(5-phosphoribosyl)-5-[(5-phosphoribosylamino)methylideneamino] imidazole-4-carboxamide isomerase, found in Caldanaerobacter subterraneus subsp. tengcongensis (strain DSM 15242 / JCM 11007 / NBRC 100824 / MB4) (Thermoanaerobacter tengcongensis).